The chain runs to 81 residues: Arminin 2a (81 aa).

A signal peptide spans 1–18 (MKTVFAILFLAFIALTYA). The propeptide occupies 19 to 57 (RSYEDVKEEIKNEVVKEILEDLEEESDELDDKSKEINDA). An Alanine amide modification is found at Ala78.

This sequence belongs to the arminin family. Expressed in entodermal epithelium along the body column.

The protein localises to the secreted. The protein resides in the target cell membrane. In terms of biological role, antimicrobial peptide with a broad-spectrum antimicrobial activity. Keeps its antibacterial activity under a wide range of salt concentrations that mimic physiological conditions of human blood, which is surprising, since Hydra is an obligate freshwater animal with nearly no salt tolerance. Does not affect red blood cells. The polypeptide is Arminin 2a (Hydra vulgaris (Hydra)).